Consider the following 78-residue polypeptide: Signal peptidase complex subunit 1 (78 aa).

The Cytoplasmic segment spans residues 1–18 (MNYLEGTIDFAGQLRCQK). The chain crosses the membrane as a helical span at residues 19–38 (YMNYGLCTSAVISYIYGYLV). At 39-42 (QDSY) the chain is on the lumenal side. Residues 43–63 (CVIKLFLILASLVALVCLPAW) traverse the membrane as a helical segment. At 64-78 (SMYNKNPLKFQKKKE) the chain is on the cytoplasmic side.

The protein belongs to the SPCS1 family. In terms of assembly, component of the signal peptidase complex (SPC) composed of a catalytic subunit sec11 and three accessory subunits spc1, spc2 and spc3. The complex induces a local thinning of the ER membrane which is used to measure the length of the signal peptide (SP) h-region of protein substrates. This ensures the selectivity of the complex towards h-regions shorter than 18-20 amino acids. SPC associates with the translocon complex.

The protein resides in the endoplasmic reticulum membrane. Its function is as follows. Component of the signal peptidase complex (SPC) which catalyzes the cleavage of N-terminal signal sequences from nascent proteins as they are translocated into the lumen of the endoplasmic reticulum. Dispensable for SPC enzymatic activity. This Schizosaccharomyces pombe (strain 972 / ATCC 24843) (Fission yeast) protein is Signal peptidase complex subunit 1.